The following is a 254-amino-acid chain: MPRYKLVVEYDGTAFAGWQRQAADRTVQQALEEAIERFVNRPVRVHCAGRTDAGVHASHQVVHLDLDREWRTDTVRDATNAHLRPEPVSVLSAARVGPDFDARHSALKRHYRYRILNRRSPPALARGYVWHVPWALDAAAMHAAAQTLLGRHDFSAFRAAECQASSPLRTLDQLDVERRGDEILVATSARSFLHHQVRGMVGTLMLAGSGRLDTAGVRAVLDSRDRARCGPLAPAAGLTLTGVDYPEAALSAPG.

Residue aspartate 52 is the Nucleophile of the active site. Tyrosine 111 provides a ligand contact to substrate.

The protein belongs to the tRNA pseudouridine synthase TruA family. Homodimer.

It catalyses the reaction uridine(38/39/40) in tRNA = pseudouridine(38/39/40) in tRNA. Its function is as follows. Formation of pseudouridine at positions 38, 39 and 40 in the anticodon stem and loop of transfer RNAs. The polypeptide is tRNA pseudouridine synthase A (Methylobacterium nodulans (strain LMG 21967 / CNCM I-2342 / ORS 2060)).